A 271-amino-acid polypeptide reads, in one-letter code: Formamidopyrimidine-DNA glycosylase (271 aa).

The active-site Schiff-base intermediate with DNA is the proline 2. Catalysis depends on glutamate 3, which acts as the Proton donor. Lysine 58 acts as the Proton donor; for beta-elimination activity in catalysis. The DNA site is built by histidine 92, arginine 111, and lysine 152. Residues 237 to 271 (YVYGKVQKPCKICNNIITLIRQNGRSTYFCNACQN) form an FPG-type zinc finger. The Proton donor; for delta-elimination activity role is filled by arginine 261.

This sequence belongs to the FPG family. In terms of assembly, monomer. Requires Zn(2+) as cofactor.

The catalysed reaction is Hydrolysis of DNA containing ring-opened 7-methylguanine residues, releasing 2,6-diamino-4-hydroxy-5-(N-methyl)formamidopyrimidine.. The enzyme catalyses 2'-deoxyribonucleotide-(2'-deoxyribose 5'-phosphate)-2'-deoxyribonucleotide-DNA = a 3'-end 2'-deoxyribonucleotide-(2,3-dehydro-2,3-deoxyribose 5'-phosphate)-DNA + a 5'-end 5'-phospho-2'-deoxyribonucleoside-DNA + H(+). Involved in base excision repair of DNA damaged by oxidation or by mutagenic agents. Acts as a DNA glycosylase that recognizes and removes damaged bases. Has a preference for oxidized purines, such as 7,8-dihydro-8-oxoguanine (8-oxoG). Has AP (apurinic/apyrimidinic) lyase activity and introduces nicks in the DNA strand. Cleaves the DNA backbone by beta-delta elimination to generate a single-strand break at the site of the removed base with both 3'- and 5'-phosphates. The polypeptide is Formamidopyrimidine-DNA glycosylase (Wolbachia sp. subsp. Drosophila simulans (strain wRi)).